The chain runs to 243 residues: 3-deoxy-manno-octulosonate cytidylyltransferase (243 aa).

It belongs to the KdsB family.

The protein localises to the cytoplasm. It catalyses the reaction 3-deoxy-alpha-D-manno-oct-2-ulosonate + CTP = CMP-3-deoxy-beta-D-manno-octulosonate + diphosphate. It participates in nucleotide-sugar biosynthesis; CMP-3-deoxy-D-manno-octulosonate biosynthesis; CMP-3-deoxy-D-manno-octulosonate from 3-deoxy-D-manno-octulosonate and CTP: step 1/1. Its pathway is bacterial outer membrane biogenesis; lipopolysaccharide biosynthesis. Its function is as follows. Activates KDO (a required 8-carbon sugar) for incorporation into bacterial lipopolysaccharide in Gram-negative bacteria. The chain is 3-deoxy-manno-octulosonate cytidylyltransferase from Helicobacter pylori (strain HPAG1).